The chain runs to 161 residues: MLNPRPCVPRLLSAVARCHKPYSTSIKSLEDLAKLKSLDDVDPDLVRKLINERTNELNSQAELAMLKQMQSQENQQQQQALKKFVRPMWIFLLMSSFFYLTGHYIWWKLEYDEREIELHKQVQALRQELDSAIAAKHSGKEPALSGAGAKKPKRWYLAWLW.

A mitochondrion-targeting transit peptide spans 1-22 (MLNPRPCVPRLLSAVARCHKPY). Residues 23–84 (STSIKSLEDL…QQQQQALKKF (62 aa)) lie on the Mitochondrial matrix side of the membrane. The chain crosses the membrane as a helical span at residues 85 to 107 (VRPMWIFLLMSSFFYLTGHYIWW). Residues 108–161 (KLEYDEREIELHKQVQALRQELDSAIAAKHSGKEPALSGAGAKKPKRWYLAWLW) are Mitochondrial intermembrane-facing. The stretch at 109–138 (LEYDEREIELHKQVQALRQELDSAIAAKHS) forms a coiled coil.

Belongs to the INA17 family. In terms of assembly, component of the inner membrane assembly (INA) complex, composed of INA17 and INA22. Interacts with a subset of F(1)F(0)-ATP synthase subunits of the F(1)-domain and the peripheral stalk.

The protein localises to the mitochondrion inner membrane. Functionally, component of the INA complex (INAC) that promotes the biogenesis of mitochondrial F(1)F(0)-ATP synthase. INAC facilitates the assembly of the peripheral stalk and promotes the assembly of the catalytic F(1)-domain with the membrane-embedded F(0)-domain. The chain is Inner membrane assembly complex subunit 17 from Lachancea thermotolerans (strain ATCC 56472 / CBS 6340 / NRRL Y-8284) (Yeast).